A 632-amino-acid chain; its full sequence is ATP-dependent DNA helicase RecQ (632 aa).

In terms of domain architecture, Helicase ATP-binding spans 47-215; the sequence is IDATLMGKDS…LRHLNLQSPH (169 aa). Residue 60–67 participates in ATP binding; the sequence is MATGNGKS. A DEAH box motif is present at residues 159–162; sequence DEAH. Residues 236–385 form the Helicase C-terminal domain; it reads PMEQLCRFVL…IEALKLQAIG (150 aa). Residues Cys-393, Cys-410, Cys-413, and Cys-416 each coordinate Zn(2+). The 81-residue stretch at 544–624 folds into the HRDC domain; the sequence is AQYDKDLFAR…QQHKKVLTQH (81 aa).

Belongs to the helicase family. RecQ subfamily. It depends on Mg(2+) as a cofactor. The cofactor is Zn(2+).

It carries out the reaction Couples ATP hydrolysis with the unwinding of duplex DNA by translocating in the 3'-5' direction.. The catalysed reaction is ATP + H2O = ADP + phosphate + H(+). Its function is as follows. An ATP-dependent DNA helicase which unwinds DNA in a 3'-5' direction. Plays a role in recombination. This is ATP-dependent DNA helicase RecQ from Pasteurella multocida (strain Pm70).